A 384-amino-acid polypeptide reads, in one-letter code: MAAAVVVAGEAAAAAAAAGAGGKKRGASRSWILFDAAGEERVLDADKYAIMHRVDINARDLRILDPLLSYPSTILGRERAIVLNLEHIKAIITAEEVLLRDPLDDNVIPVVEELRRRLAPSSATQHDVEGAEEDESPFEFRALEVTLEAICSFLGARTTELESAAYPALDELTSKISSRNLDRVRKLKSGMTRLNARVQKVRDELEQLLDDDDDMADLYLSRKLAGAASPVSGSGGPNWFPASPTIGSKISRASRASAPTIHGNENDVEELEMLLEAYFMQIDGTLNKLTTLREYIDDTEDYINIQLDNHRNQLIQLELFLSSGTVCLSLYSLVAGIFGMNIPYTWNDNHGYVFKWVVLVSGLFCAFMFVSIVAYARHKGLVGS.

2 helical membrane passes run 319 to 339 (LFLS…GIFG) and 356 to 376 (WVVL…VAYA). The short motif at 339 to 341 (GMN) is the Required for magnesium transport activity element.

The protein belongs to the CorA metal ion transporter (MIT) (TC 1.A.35.5) family.

The protein localises to the membrane. Its function is as follows. Magnesium transporter that may mediate the influx of magnesium. The chain is Magnesium transporter MRS2-I (MRS2-I) from Oryza sativa subsp. japonica (Rice).